The following is a 70-amino-acid chain: Small integral membrane protein 42 (70 aa).

The helical transmembrane segment at Leu-26 to Val-46 threads the bilayer.

It localises to the membrane. This is Small integral membrane protein 42 from Homo sapiens (Human).